Reading from the N-terminus, the 298-residue chain is Acetylglutamate kinase (298 aa).

Residues 69-70 (GG), R91, and N191 contribute to the substrate site.

It belongs to the acetylglutamate kinase family. ArgB subfamily.

Its subcellular location is the cytoplasm. The enzyme catalyses N-acetyl-L-glutamate + ATP = N-acetyl-L-glutamyl 5-phosphate + ADP. The protein operates within amino-acid biosynthesis; L-arginine biosynthesis; N(2)-acetyl-L-ornithine from L-glutamate: step 2/4. Its function is as follows. Catalyzes the ATP-dependent phosphorylation of N-acetyl-L-glutamate. The sequence is that of Acetylglutamate kinase from Neisseria meningitidis serogroup C (strain 053442).